We begin with the raw amino-acid sequence, 297 residues long: Protease HtpX homolog (297 aa).

A helical transmembrane segment spans residues 16–36 (IFMAIGFLVGGMAGMILAFVV). His134 contributes to the Zn(2+) binding site. Glu135 is an active-site residue. His138 serves as a coordination point for Zn(2+). The next 2 helical transmembrane spans lie at 147–167 (MTVT…ALFF) and 175–195 (IGSI…QMAI). Zn(2+) is bound at residue Glu200.

Belongs to the peptidase M48B family. Zn(2+) is required as a cofactor.

The protein resides in the cell inner membrane. This chain is Protease HtpX homolog, found in Hyphomonas neptunium (strain ATCC 15444).